Here is a 220-residue protein sequence, read N- to C-terminus: Heptaprenyl diphosphate synthase component 1 (220 aa).

Heterodimer of component I and II.

The catalysed reaction is 4 isopentenyl diphosphate + (2E,6E)-farnesyl diphosphate = all-trans-heptaprenyl diphosphate + 4 diphosphate. Functionally, supplies heptaprenyl diphosphate, the precursor for the side chain of the isoprenoid quinone menaquinone-7 (MQ-7). This chain is Heptaprenyl diphosphate synthase component 1 (hepS), found in Geobacillus stearothermophilus (Bacillus stearothermophilus).